Reading from the N-terminus, the 827-residue chain is N-terminal kinase-like protein (827 aa).

The region spanning 1 to 309 (MWFWSRDPAR…PEDFCRHKIL (309 aa)) is the Protein kinase domain. 3 HEAT repeats span residues 345 to 383 (IIPVVVKMFSSTDRAMRIRLLQQMENFIQYLNEPTVNAQ), 384 to 422 (IFPHVVHGFMDTNPAIREQTVKSMLLLAPKLNENNLNME), and 502 to 540 (VLPVLCGVTVDPEKNVREQAFKAIRSFLDKLETVSEDPS). A compositionally biased stretch (low complexity) spans 586–624 (DAAASEGASAPSTASEASKPDTAPSSSAPPAAASTAPTS). The interval 586–827 (DAAASEGASA…PLKLGVRKLD (242 aa)) is disordered. Over residues 630–640 (EKGAPDNSLDR) the composition is skewed to basic and acidic residues. The segment covering 641 to 652 (WDDEDWGSLEDA) has biased composition (acidic residues). The segment covering 667–678 (DWGHGKTQEKTV) has biased composition (basic and acidic residues). Composition is skewed to polar residues over residues 679–690 (DFSSSRSKTKQV) and 737–746 (NWDTSGSSGR). Over residues 774-783 (GGDDNWESVE) the composition is skewed to acidic residues. The stretch at 788–817 (LSKAEMARKKREERQKEIEAKRAERRAAKG) forms a coiled coil. The segment covering 792-814 (EMARKKREERQKEIEAKRAERRA) has biased composition (basic and acidic residues).

It belongs to the protein kinase superfamily.

In terms of biological role, regulates COPI-mediated retrograde protein traffic at the interface between the Golgi apparatus and the endoplasmic reticulum. Involved in the maintenance of the Golgi apparatus morphology. The sequence is that of N-terminal kinase-like protein (scyl1) from Xenopus tropicalis (Western clawed frog).